The following is a 166-amino-acid chain: Protein C2-DOMAIN ABA-RELATED 11 (166 aa).

Residue methionine 1 is modified to N-acetylmethionine. One can recognise a C2 domain in the interval 1–103; the sequence is MGEPLGLLQV…ISVARLRHVV (103 aa). An N-acetylglycine; in Protein C2-DOMAIN ABA-RELATED 11, N-terminally processed modification is found at glycine 2. The Ca(2+) site is built by arginine 21, aspartate 22, aspartate 27, aspartate 73, lysine 74, aspartate 75, and aspartate 81.

It belongs to the plant CAR protein family. Binds to PYR/PYL/RCAR abscisic acid intracellular receptors in an ABA-independent manner, both at the plasma membrane and in the nucleus.

The protein resides in the cell membrane. The protein localises to the nucleus. Functionally, stimulates the GTPase/ATPase activities of Obg-like ATPases. Mediates the transient calcium-dependent interaction of PYR/PYL/RCAR abscisic acid (ABA) receptors with the plasma membrane and thus regulates ABA sensitivity. This is Protein C2-DOMAIN ABA-RELATED 11 from Arabidopsis thaliana (Mouse-ear cress).